Here is a 379-residue protein sequence, read N- to C-terminus: Probable malonyl-CoA-acyl carrier protein transacylase, mitochondrial (379 aa).

Residues 1 to 23 (MLAARRLLRSPRITGALSWSRWS) constitute a mitochondrion transit peptide. Catalysis depends on residues Ser-158 and His-275.

The protein belongs to the type II malonyltransferase family.

The protein resides in the mitochondrion. The enzyme catalyses holo-[ACP] + malonyl-CoA = malonyl-[ACP] + CoA. The protein operates within lipid metabolism; fatty acid biosynthesis. In terms of biological role, catalyzes the transfer of a malonyl moiety from malonyl-CoA to the free thiol group of the phosphopantetheine arm of the ACP protein. This suggests the existence of the biosynthesis of fatty acids in mitochondria. The chain is Probable malonyl-CoA-acyl carrier protein transacylase, mitochondrial from Drosophila melanogaster (Fruit fly).